The sequence spans 993 residues: Isoleucine--tRNA ligase (993 aa).

A 'HIGH' region motif is present at residues 64–74 (PYANGNIHIGH). Residue glutamate 621 participates in L-isoleucyl-5'-AMP binding. Positions 662–666 (KMSKS) match the 'KMSKS' region motif. Lysine 665 contributes to the ATP binding site.

The protein belongs to the class-I aminoacyl-tRNA synthetase family. IleS type 1 subfamily. In terms of assembly, monomer.

The protein resides in the cytoplasm. The enzyme catalyses tRNA(Ile) + L-isoleucine + ATP = L-isoleucyl-tRNA(Ile) + AMP + diphosphate. Functionally, catalyzes the attachment of isoleucine to tRNA(Ile). As IleRS can inadvertently accommodate and process structurally similar amino acids such as valine, to avoid such errors it has two additional distinct tRNA(Ile)-dependent editing activities. One activity is designated as 'pretransfer' editing and involves the hydrolysis of activated Val-AMP. The other activity is designated 'posttransfer' editing and involves deacylation of mischarged Val-tRNA(Ile). This chain is Isoleucine--tRNA ligase, found in Mesorhizobium japonicum (strain LMG 29417 / CECT 9101 / MAFF 303099) (Mesorhizobium loti (strain MAFF 303099)).